The chain runs to 599 residues: Putative sensor histidine kinase NtrY-like (599 aa).

4 helical membrane-spanning segments follow: residues isoleucine 17 to isoleucine 37, phenylalanine 44 to leucine 64, isoleucine 85 to valine 105, and isoleucine 285 to phenylalanine 305. Positions alanine 307 to arginine 361 constitute an HAMP domain. Positions lysine 378 to glutamate 589 constitute a Histidine kinase domain. At histidine 381 the chain carries Phosphohistidine; by autocatalysis.

Its subcellular location is the cell membrane. It catalyses the reaction ATP + protein L-histidine = ADP + protein N-phospho-L-histidine.. Functionally, member of the two-component regulatory system RP614/RP562. This chain is Putative sensor histidine kinase NtrY-like, found in Rickettsia prowazekii (strain Madrid E).